A 311-amino-acid polypeptide reads, in one-letter code: Ribosomal protein L11 methyltransferase (311 aa).

4 residues coordinate S-adenosyl-L-methionine: threonine 160, glycine 181, aspartate 203, and asparagine 246.

It belongs to the methyltransferase superfamily. PrmA family.

It is found in the cytoplasm. It catalyses the reaction L-lysyl-[protein] + 3 S-adenosyl-L-methionine = N(6),N(6),N(6)-trimethyl-L-lysyl-[protein] + 3 S-adenosyl-L-homocysteine + 3 H(+). In terms of biological role, methylates ribosomal protein L11. This is Ribosomal protein L11 methyltransferase from Macrococcus caseolyticus (strain JCSC5402) (Macrococcoides caseolyticum).